The following is a 292-amino-acid chain: Sulfofructosephosphate aldolase (292 aa).

The active-site Schiff-base intermediate with substrate is K193.

Belongs to the aldolase LacD family. As to quaternary structure, homotetramer.

The enzyme catalyses 6-deoxy-6-sulfo-D-fructose 1-phosphate = (2S)-3-sulfolactaldehyde + dihydroxyacetone phosphate. Its function is as follows. Cleaves 6-deoxy-6-sulfo-D-fructose 1-phosphate (SFP) to form dihydroxyacetone phosphate (DHAP) and 3-sulfolactaldehyde (SLA). In Salmonella typhi, this protein is Sulfofructosephosphate aldolase (yihT).